Here is a 37-residue protein sequence, read N- to C-terminus: Large ribosomal subunit protein bL36 (37 aa).

Belongs to the bacterial ribosomal protein bL36 family.

The protein is Large ribosomal subunit protein bL36 of Mycobacterium leprae (strain Br4923).